The primary structure comprises 627 residues: Phosphomethylpyrimidine synthase (627 aa).

Polar residues predominate over residues 1-21 (MSAQQQKNLSESAQVDQQSVQ). The disordered stretch occupies residues 1-32 (MSAQQQKNLSESAQVDQQSVQPFPRSQKVYVQ). Residues Asn231, Met260, Tyr289, His325, 345-347 (SRG), 386-389 (DGLR), and Glu425 each bind substrate. Zn(2+) is bound at residue His429. Tyr452 serves as a coordination point for substrate. Residue His493 participates in Zn(2+) binding. Positions 573, 576, and 581 each coordinate [4Fe-4S] cluster.

It belongs to the ThiC family. Homodimer. [4Fe-4S] cluster serves as cofactor.

It carries out the reaction 5-amino-1-(5-phospho-beta-D-ribosyl)imidazole + S-adenosyl-L-methionine = 4-amino-2-methyl-5-(phosphooxymethyl)pyrimidine + CO + 5'-deoxyadenosine + formate + L-methionine + 3 H(+). The protein operates within cofactor biosynthesis; thiamine diphosphate biosynthesis. Catalyzes the synthesis of the hydroxymethylpyrimidine phosphate (HMP-P) moiety of thiamine from aminoimidazole ribotide (AIR) in a radical S-adenosyl-L-methionine (SAM)-dependent reaction. This Ectopseudomonas mendocina (strain ymp) (Pseudomonas mendocina) protein is Phosphomethylpyrimidine synthase.